The chain runs to 185 residues: Cuticle protein 18.6, isoform B (185 aa).

Repeat copies occupy residues 21 to 24, 33 to 36, 41 to 44, 133 to 136, 139 to 142, and 150 to 153. Residues 64 to 134 form the Chitin-binding type R&amp;R domain; that stretch reads HPQYSFAYNV…KEAGAHPAAA (71 aa).

In terms of biological role, component of the cuticle of migratory locust which contains more than 100 different structural proteins. The protein is Cuticle protein 18.6, isoform B of Locusta migratoria (Migratory locust).